The primary structure comprises 199 residues: 3-isopropylmalate dehydratase small subunit (199 aa).

The protein belongs to the LeuD family. LeuD type 1 subfamily. As to quaternary structure, heterodimer of LeuC and LeuD.

The enzyme catalyses (2R,3S)-3-isopropylmalate = (2S)-2-isopropylmalate. Its pathway is amino-acid biosynthesis; L-leucine biosynthesis; L-leucine from 3-methyl-2-oxobutanoate: step 2/4. In terms of biological role, catalyzes the isomerization between 2-isopropylmalate and 3-isopropylmalate, via the formation of 2-isopropylmaleate. The chain is 3-isopropylmalate dehydratase small subunit from Pseudoalteromonas translucida (strain TAC 125).